The sequence spans 38 residues: Large ribosomal subunit protein bL36 (38 aa).

The protein belongs to the bacterial ribosomal protein bL36 family.

In Acholeplasma laidlawii (strain PG-8A), this protein is Large ribosomal subunit protein bL36.